The chain runs to 32 residues: MPRSLKKGPFIDLHLLKKVEKAVESGDKKPIR.

This sequence belongs to the universal ribosomal protein uS19 family.

Its function is as follows. Protein S19 forms a complex with S13 that binds strongly to the 16S ribosomal RNA. The polypeptide is Small ribosomal subunit protein uS19 (rpsS) (Yersinia enterocolitica).